A 681-amino-acid chain; its full sequence is Chaperone protein HtpG (681 aa).

Residues 1–326 (MQKGNIGVTT…SPDIPLNVSR (326 aa)) are a; substrate-binding. The interval 327–545 (SYLQSDSNVK…YMRRMKEMAN (219 aa)) is b. The c stretch occupies residues 546-681 (IQAGMSFYGE…NFVKRSIELI (136 aa)). Positions 601-620 (DALKKKQEGKKDEDIPTAEK) are disordered.

The protein belongs to the heat shock protein 90 family. In terms of assembly, homodimer.

The protein resides in the cytoplasm. Functionally, molecular chaperone. Has ATPase activity. The polypeptide is Chaperone protein HtpG (Bacteroides fragilis (strain ATCC 25285 / DSM 2151 / CCUG 4856 / JCM 11019 / LMG 10263 / NCTC 9343 / Onslow / VPI 2553 / EN-2)).